Consider the following 232-residue polypeptide: Enolase-phosphatase E1 (232 aa).

It belongs to the HAD-like hydrolase superfamily. MasA/MtnC family. In terms of assembly, monomer. Requires Mg(2+) as cofactor.

It carries out the reaction 5-methylsulfanyl-2,3-dioxopentyl phosphate + H2O = 1,2-dihydroxy-5-(methylsulfanyl)pent-1-en-3-one + phosphate. The protein operates within amino-acid biosynthesis; L-methionine biosynthesis via salvage pathway; L-methionine from S-methyl-5-thio-alpha-D-ribose 1-phosphate: step 3/6. It functions in the pathway amino-acid biosynthesis; L-methionine biosynthesis via salvage pathway; L-methionine from S-methyl-5-thio-alpha-D-ribose 1-phosphate: step 4/6. Functionally, bifunctional enzyme that catalyzes the enolization of 2,3-diketo-5-methylthiopentyl-1-phosphate (DK-MTP-1-P) into the intermediate 2-hydroxy-3-keto-5-methylthiopentenyl-1-phosphate (HK-MTPenyl-1-P), which is then dephosphorylated to form the acireductone 1,2-dihydroxy-3-keto-5-methylthiopentene (DHK-MTPene). The sequence is that of Enolase-phosphatase E1 from Xylella fastidiosa (strain 9a5c).